Reading from the N-terminus, the 581-residue chain is Proline--tRNA ligase (581 aa).

The protein belongs to the class-II aminoacyl-tRNA synthetase family. ProS type 1 subfamily. Homodimer.

Its subcellular location is the cytoplasm. It carries out the reaction tRNA(Pro) + L-proline + ATP = L-prolyl-tRNA(Pro) + AMP + diphosphate. Catalyzes the attachment of proline to tRNA(Pro) in a two-step reaction: proline is first activated by ATP to form Pro-AMP and then transferred to the acceptor end of tRNA(Pro). As ProRS can inadvertently accommodate and process non-cognate amino acids such as alanine and cysteine, to avoid such errors it has two additional distinct editing activities against alanine. One activity is designated as 'pretransfer' editing and involves the tRNA(Pro)-independent hydrolysis of activated Ala-AMP. The other activity is designated 'posttransfer' editing and involves deacylation of mischarged Ala-tRNA(Pro). The misacylated Cys-tRNA(Pro) is not edited by ProRS. In Kosmotoga olearia (strain ATCC BAA-1733 / DSM 21960 / TBF 19.5.1), this protein is Proline--tRNA ligase.